The primary structure comprises 356 residues: Tetraacyldisaccharide 4'-kinase (356 aa).

F67–T74 is a binding site for ATP.

It belongs to the LpxK family.

It catalyses the reaction a lipid A disaccharide + ATP = a lipid IVA + ADP + H(+). The protein operates within glycolipid biosynthesis; lipid IV(A) biosynthesis; lipid IV(A) from (3R)-3-hydroxytetradecanoyl-[acyl-carrier-protein] and UDP-N-acetyl-alpha-D-glucosamine: step 6/6. In terms of biological role, transfers the gamma-phosphate of ATP to the 4'-position of a tetraacyldisaccharide 1-phosphate intermediate (termed DS-1-P) to form tetraacyldisaccharide 1,4'-bis-phosphate (lipid IVA). The chain is Tetraacyldisaccharide 4'-kinase from Herminiimonas arsenicoxydans.